The primary structure comprises 916 residues: Alanine--tRNA ligase (916 aa).

His-611, His-615, Cys-714, and His-718 together coordinate Zn(2+).

It belongs to the class-II aminoacyl-tRNA synthetase family. Zn(2+) is required as a cofactor.

It is found in the cytoplasm. It carries out the reaction tRNA(Ala) + L-alanine + ATP = L-alanyl-tRNA(Ala) + AMP + diphosphate. Its function is as follows. Catalyzes the attachment of alanine to tRNA(Ala) in a two-step reaction: alanine is first activated by ATP to form Ala-AMP and then transferred to the acceptor end of tRNA(Ala). Also edits incorrectly charged Ser-tRNA(Ala) and Gly-tRNA(Ala) via its editing domain. The protein is Alanine--tRNA ligase of Methanospirillum hungatei JF-1 (strain ATCC 27890 / DSM 864 / NBRC 100397 / JF-1).